The chain runs to 218 residues: Octanoyltransferase (218 aa).

The BPL/LPL catalytic domain maps to 30-217; sequence GEAGELVWLV…SFARNFPPLA (188 aa). Residues 68–75, 148–150, and 161–163 each bind substrate; these read RGGQYTYH, AIG, and GIA. Cysteine 179 (acyl-thioester intermediate) is an active-site residue.

It belongs to the LipB family.

The protein localises to the cytoplasm. It catalyses the reaction octanoyl-[ACP] + L-lysyl-[protein] = N(6)-octanoyl-L-lysyl-[protein] + holo-[ACP] + H(+). The protein operates within protein modification; protein lipoylation via endogenous pathway; protein N(6)-(lipoyl)lysine from octanoyl-[acyl-carrier-protein]: step 1/2. Its function is as follows. Catalyzes the transfer of endogenously produced octanoic acid from octanoyl-acyl-carrier-protein onto the lipoyl domains of lipoate-dependent enzymes. Lipoyl-ACP can also act as a substrate although octanoyl-ACP is likely to be the physiological substrate. The chain is Octanoyltransferase from Paracoccus denitrificans (strain Pd 1222).